A 308-amino-acid polypeptide reads, in one-letter code: Ribosomal RNA small subunit methyltransferase H (308 aa).

S-adenosyl-L-methionine contacts are provided by residues 36 to 38, Asp-55, Phe-86, Asp-103, and Gln-110; that span reads GGH.

This sequence belongs to the methyltransferase superfamily. RsmH family.

It localises to the cytoplasm. The catalysed reaction is cytidine(1402) in 16S rRNA + S-adenosyl-L-methionine = N(4)-methylcytidine(1402) in 16S rRNA + S-adenosyl-L-homocysteine + H(+). Specifically methylates the N4 position of cytidine in position 1402 (C1402) of 16S rRNA. This chain is Ribosomal RNA small subunit methyltransferase H, found in Helicobacter pylori (strain Shi470).